The chain runs to 137 residues: Type III secretion protein HrcQb (137 aa).

A compositionally biased stretch (acidic residues) spans 1–22 (MSTEDLYQDDVESLEDYDDETA). Residues 1–67 (MSTEDLYQDD…EQQAPSGLDS (67 aa)) form a disordered region. The segment covering 23 to 33 (EQEHEHEHEQQ) has biased composition (basic and acidic residues). The span at 36-58 (EPDDESEYAEAEPDDDEQEEQEE) shows a compositional bias: acidic residues.

It belongs to the FliN/MopA/SpaO family. As to quaternary structure, homotetramer. The four monomers assemble into two tightly bound homodimers. Interacts with HrcQa.

It localises to the cytoplasm. Its function is as follows. Component of the type III secretion system, which is required for effector protein delivery, parasitism, and pathogenicity. Probably participates in the formation of a C-ring-like assembly along with HrcQa. The polypeptide is Type III secretion protein HrcQb (hrcQb) (Pseudomonas syringae pv. tomato (strain ATCC BAA-871 / DC3000)).